Reading from the N-terminus, the 76-residue chain is Serine proteinase inhibitor IA-1 (76 aa).

An N-acetylserine modification is found at Ser-1.

The protein belongs to the protease inhibitor I9 family.

Specifically inhibits an endogenous intracellular serine proteinase (proteinase A). This Pleurotus ostreatus (Oyster mushroom) protein is Serine proteinase inhibitor IA-1.